The following is a 109-amino-acid chain: Probable gas vesicle protein J1 (109 aa).

It belongs to the gas vesicle GvpA family. As to quaternary structure, interacts with GvpA.

The protein localises to the gas vesicle. Its function is as follows. A minor component of the gas vesicle, might be involved in nucleating gas vesicle formation. Gas vesicles (GV) are hollow, gas filled proteinaceous nanostructures. It is not clear what function GVs perform in soil bacteria. The chain is Probable gas vesicle protein J1 (gvpJ1) from Streptomyces coelicolor (strain ATCC BAA-471 / A3(2) / M145).